The following is a 647-amino-acid chain: Acetyl-coenzyme A synthetase (647 aa).

CoA contacts are provided by residues arginine 192 to arginine 195, threonine 310, and asparagine 334. ATP is bound by residues glycine 386–proline 388, aspartate 410–threonine 415, aspartate 499, and arginine 514. Residue serine 522 participates in CoA binding. Residue arginine 525 coordinates ATP. The Mg(2+) site is built by valine 536, histidine 538, and valine 541. CoA is bound at residue arginine 583. At lysine 608 the chain carries N6-acetyllysine.

Belongs to the ATP-dependent AMP-binding enzyme family. Mg(2+) is required as a cofactor. Post-translationally, acetylated. Deacetylation by the SIR2-homolog deacetylase activates the enzyme.

The catalysed reaction is acetate + ATP + CoA = acetyl-CoA + AMP + diphosphate. Its function is as follows. Catalyzes the conversion of acetate into acetyl-CoA (AcCoA), an essential intermediate at the junction of anabolic and catabolic pathways. AcsA undergoes a two-step reaction. In the first half reaction, AcsA combines acetate with ATP to form acetyl-adenylate (AcAMP) intermediate. In the second half reaction, it can then transfer the acetyl group from AcAMP to the sulfhydryl group of CoA, forming the product AcCoA. In Caulobacter vibrioides (strain ATCC 19089 / CIP 103742 / CB 15) (Caulobacter crescentus), this protein is Acetyl-coenzyme A synthetase.